The primary structure comprises 226 residues: Fibrillarin-like rRNA/tRNA 2'-O-methyltransferase (226 aa).

S-adenosyl-L-methionine is bound by residues Thr85 to Thr86, Glu104 to Phe105, Asp129 to Ala130, and Asp149 to Gln152.

Belongs to the methyltransferase superfamily. Fibrillarin family. In terms of assembly, interacts with nop5. Component of box C/D small ribonucleoprotein (sRNP) particles that contain rpl7ae, FlpA and nop5, plus a guide RNA.

In terms of biological role, involved in pre-rRNA and tRNA processing. Utilizes the methyl donor S-adenosyl-L-methionine to catalyze the site-specific 2'-hydroxyl methylation of ribose moieties in rRNA and tRNA. Site specificity is provided by a guide RNA that base pairs with the substrate. Methylation occurs at a characteristic distance from the sequence involved in base pairing with the guide RNA. This Thermococcus gammatolerans (strain DSM 15229 / JCM 11827 / EJ3) protein is Fibrillarin-like rRNA/tRNA 2'-O-methyltransferase.